Reading from the N-terminus, the 596-residue chain is Probable ATP-dependent RNA helicase DDX52 (596 aa).

At Lys-15 the chain carries N6-acetyllysine. At Ser-39 the chain carries Phosphoserine. The tract at residues 68–94 is disordered; that stretch reads LPDEEKTEESQIERKKQNRKKKKITSE. The short motif at 163–191 is the Q motif element; sequence QLDQEYKINSRLLQNILDAGFQTPTPIQM. The Helicase ATP-binding domain maps to 194–372; the sequence is IPVMLHGREL…RLNLDSVITV (179 aa). Position 207 to 214 (207 to 214) interacts with ATP; sequence APTGSGKT. The DEAD box signature appears at 316–319; the sequence is DESD. The Helicase C-terminal domain occupies 383–544; it reads TVEQELLFVG…PVPEYIKGFQ (162 aa). Residues 575-596 form a disordered region; sequence AKDKRKKVTGQNKKKVAPEDKS. Residues 577 to 589 show a composition bias toward basic residues; sequence DKRKKVTGQNKKK.

It belongs to the DEAD box helicase family. DDX52/ROK1 subfamily.

It is found in the nucleus. The protein localises to the nucleolus. The enzyme catalyses ATP + H2O = ADP + phosphate + H(+). The polypeptide is Probable ATP-dependent RNA helicase DDX52 (DDX52) (Bos taurus (Bovine)).